Reading from the N-terminus, the 619-residue chain is Probable ATP-dependent RNA helicase DDX59 (619 aa).

A Glycyl lysine isopeptide (Lys-Gly) (interchain with G-Cter in SUMO2) cross-link involves residue K26. A disordered region spans residues 57–98; that stretch reads SESCPFPSPGGQLAEVHSVSPEQGAKDSHPSEEPVKSFSKTQ. Phosphoserine occurs at positions 64 and 76. Positions 80–91 are enriched in basic and acidic residues; that stretch reads GAKDSHPSEEPV. The HIT-type zinc finger occupies 104–133; the sequence is GEPICVVCGRYGEYICDKTDEDVCSLECKA. The segment at 142–161 is disordered; sequence KEEKSKLSNPQKADSEPESP. A phosphoserine mark is found at S156 and S160. The Q motif motif lies at 203–231; it reads IDFEHCSLPEVLNHNLKKSGYEVPTPIQM. Positions 234–405 constitute a Helicase ATP-binding domain; it reads IPVGLLGRDI…SQLLHNPVRI (172 aa). Position 247 to 254 (247 to 254) interacts with ATP; the sequence is ADTGSGKT. The DEAD box motif lies at 353–356; the sequence is DEAD. Residues 416–579 form the Helicase C-terminal domain; it reads NVRQIILWVE…ILPPQLLNSP (164 aa).

It belongs to the DEAD box helicase family. DDX59 subfamily. Interacts (via HIT-type zinc finger) with the RUVBL1/RUVBL2 complex in the presence of ADP. In terms of tissue distribution, expressed in fibroblasts (at protein level).

It localises to the cytoplasm. Its subcellular location is the nucleus. The enzyme catalyses ATP + H2O = ADP + phosphate + H(+). In Homo sapiens (Human), this protein is Probable ATP-dependent RNA helicase DDX59 (DDX59).